Consider the following 55-residue polypeptide: uncharacterized protein (55 aa).

Polar residues predominate over residues 1-15 (MVGQEQLESSPLCQH). Positions 1 to 26 (MVGQEQLESSPLCQHSDNETETKREC) are disordered. A compositionally biased stretch (basic and acidic residues) spans 16-26 (SDNETETKREC).

This is an uncharacterized protein from Escherichia coli (strain K12).